Reading from the N-terminus, the 510-residue chain is Pyruvate kinase, cytosolic isozyme (510 aa).

R50 serves as a coordination point for substrate. K(+) contacts are provided by N52, S54, D84, and T85. Residue 52–55 (NFSH) participates in ATP binding. Residues R91 and K176 each coordinate ATP. A Mg(2+)-binding site is contributed by E242. The substrate site is built by G265, D266, and T298. Mg(2+) is bound at residue D266.

It belongs to the pyruvate kinase family. Homotetramer. Mg(2+) is required as a cofactor. Requires K(+) as cofactor.

The protein resides in the cytoplasm. The enzyme catalyses pyruvate + ATP = phosphoenolpyruvate + ADP + H(+). The protein operates within carbohydrate degradation; glycolysis; pyruvate from D-glyceraldehyde 3-phosphate: step 5/5. The sequence is that of Pyruvate kinase, cytosolic isozyme from Solanum tuberosum (Potato).